A 360-amino-acid polypeptide reads, in one-letter code: Photosystem II protein D1 (360 aa).

3 helical membrane passes run 29–46 (YIGW…TATT), 118–133 (HFLL…EWEF), and 142–156 (WISV…AASA). His-118 lines the chlorophyll a pocket. Trp-126 is a pheophytin a binding site. Positions 170 and 189 each coordinate [CaMn4O5] cluster. The chain crosses the membrane as a helical span at residues 197-218 (FHQLGVAGVFGGSLFSAMHGSL). His-198 contacts chlorophyll a. A quinone contacts are provided by residues His-215 and 264–265 (SF). Residue His-215 coordinates Fe cation. Residue His-272 coordinates Fe cation. Residues 274 to 288 (FLGLWPVVGIWFTAL) traverse the membrane as a helical segment. Residues His-332, Glu-333, Asp-342, and Ala-344 each contribute to the [CaMn4O5] cluster site. A propeptide spanning residues 345-360 (AGESLPVALTAPAVNG) is cleaved from the precursor.

This sequence belongs to the reaction center PufL/M/PsbA/D family. PSII is composed of 1 copy each of membrane proteins PsbA, PsbB, PsbC, PsbD, PsbE, PsbF, PsbH, PsbI, PsbJ, PsbK, PsbL, PsbM, PsbT, PsbX, PsbY, PsbZ, Psb30/Ycf12, at least 3 peripheral proteins of the oxygen-evolving complex and a large number of cofactors. It forms dimeric complexes. The cofactor is The D1/D2 heterodimer binds P680, chlorophylls that are the primary electron donor of PSII, and subsequent electron acceptors. It shares a non-heme iron and each subunit binds pheophytin, quinone, additional chlorophylls, carotenoids and lipids. D1 provides most of the ligands for the Mn4-Ca-O5 cluster of the oxygen-evolving complex (OEC). There is also a Cl(-1) ion associated with D1 and D2, which is required for oxygen evolution. The PSII complex binds additional chlorophylls, carotenoids and specific lipids.. Post-translationally, tyr-161 forms a radical intermediate that is referred to as redox-active TyrZ, YZ or Y-Z. C-terminally processed by CTPA; processing is essential to allow assembly of the oxygen-evolving complex and thus photosynthetic growth.

The protein resides in the plastid. It is found in the chloroplast thylakoid membrane. The enzyme catalyses 2 a plastoquinone + 4 hnu + 2 H2O = 2 a plastoquinol + O2. In terms of biological role, photosystem II (PSII) is a light-driven water:plastoquinone oxidoreductase that uses light energy to abstract electrons from H(2)O, generating O(2) and a proton gradient subsequently used for ATP formation. It consists of a core antenna complex that captures photons, and an electron transfer chain that converts photonic excitation into a charge separation. The D1/D2 (PsbA/PsbD) reaction center heterodimer binds P680, the primary electron donor of PSII as well as several subsequent electron acceptors. The sequence is that of Photosystem II protein D1 from Rhodomonas salina (Cryptomonas salina).